A 301-amino-acid chain; its full sequence is Thyroxine 5-deiodinase (301 aa).

Residues 1–41 are Cytoplasmic-facing; it reads MSRQAAPRWVVGEGRGTLGGAATMLRSLLLHSLRLCSQTAS. Residues 42-64 traverse the membrane as a helical; Signal-anchor for type II membrane protein segment; it reads CLVLFPRFLGTAFMLWLLDFLCI. The Extracellular portion of the chain corresponds to 65-301; that stretch reads RKHLLGRRRR…QLHGPQPRRV (237 aa). Selenocysteine 167 is a catalytic residue. Residue selenocysteine 167 is a non-standard amino acid, selenocysteine.

This sequence belongs to the iodothyronine deiodinase family. Monomer. Homodimer. May undergo minor heretodimerization with DIO1 and DIO2. In terms of tissue distribution, highly expressed in mammary gland. Detected at lower levels in kidney, and at very low levels in the other tissues.

The protein resides in the cell membrane. The protein localises to the endosome membrane. The catalysed reaction is 3,3',5'-triiodo-L-thyronine + iodide + A + H(+) = L-thyroxine + AH2. It catalyses the reaction 3,3'-diiodo-L-thyronine + iodide + A + H(+) = 3,3',5-triiodo-L-thyronine + AH2. It carries out the reaction 3-iodo-L-thyronine + iodide + A + H(+) = 3,5-diiodo-L-thyronine + AH2. The enzyme catalyses L-thyronine + iodide + A + H(+) = 3-iodo-L-thyronine + AH2. The catalysed reaction is 3',5'-diiodo-L-thyronine + iodide + A + H(+) = 3,3',5'-triiodo-L-thyronine + AH2. It catalyses the reaction 3'-iodo-L-thyronine + iodide + A + H(+) = 3,3'-diiodo-L-thyronine + AH2. It carries out the reaction 3,3',5'-triiodothyronamine + iodide + A + H(+) = 3,3',5,5'-tetraiodothyronamine + AH2. The enzyme catalyses 3',5'-diiodothyronamine + iodide + A + H(+) = 3,3',5'-triiodothyronamine + AH2. The catalysed reaction is 3,3'-diiodothyronamine + iodide + A + H(+) = 3,3',5-triiodothyronamine + AH2. It catalyses the reaction 3-iodothyronamine + iodide + A + H(+) = 3,5-diiodothyronamine + AH2. It carries out the reaction 3'-iodothyronamine + iodide + A + H(+) = 3,3'-diiodothyronamine + AH2. The enzyme catalyses thyronamine + iodide + A + H(+) = 3-iodothyronamine + AH2. In terms of biological role, plays a crucial role in the metabolism of thyroid hormones (TH) and has specific roles in TH activation and inactivation by deiodination. Catalyzes the deiodination of L-thyroxine (T4) to 3,3',5'-triiodothyronine (rT3), 3,5,3'-triiodothyronine (T3) to 3,3'-diiodothyronine (3,3'-T2), 3,5-diiodothyronine (3,5-T2) to 3-monoiodothyronine (3-T1), rT3 to 3',5'-diiodothyronine (3',5'-T2) and 3,3'-T2 to 3'-monoiodothyronine (3'-T1) via inner-ring deiodination (IRD). Catalyzes the deiodination of 3-T1 to L-thyronine (T0) via outer-ring deiodination (ORD). Catalyzes the tyrosyl ring deiodinations of 3,3',5,5'-tetraiodothyronamine, 3,3',5'-triiodothyronamine, 3,5,3'-triiodothyronamine, 3,5-diiodothyronamine, 3,3'-diiodothyronamine and 3-iodothyronamine. This is Thyroxine 5-deiodinase (DIO3) from Bos taurus (Bovine).